The primary structure comprises 427 residues: Phosphatidylinositol 4-phosphate 5-kinase 10 (427 aa).

In terms of domain architecture, PIPK spans 1–419 (MFTREITAKD…RFQDFVSQIF (419 aa)). Disordered stretches follow at residues 247–287 (SRGS…DSEN) and 334–355 (MKIP…VGKQ). An activation loop region spans residues 379–400 (YGVRKRLEHCYKSIQHSSKTIS).

It carries out the reaction a 1,2-diacyl-sn-glycero-3-phospho-(1D-myo-inositol 4-phosphate) + ATP = a 1,2-diacyl-sn-glycero-3-phospho-(1D-myo-inositol-4,5-bisphosphate) + ADP + H(+). The chain is Phosphatidylinositol 4-phosphate 5-kinase 10 (PIP5K10) from Arabidopsis thaliana (Mouse-ear cress).